Here is a 182-residue protein sequence, read N- to C-terminus: Putative manganese efflux pump MntP (182 aa).

The next 6 helical transmembrane spans lie at 6 to 26 (LIPL…VSLG), 37 to 57 (ILYI…IGMV), 71 to 91 (HFAG…SSIL), 101 to 121 (IGIS…SVGL), 131 to 151 (IITI…GLLI), and 162 to 182 (YGEI…LFPI).

This sequence belongs to the MntP (TC 9.B.29) family.

Its subcellular location is the cell membrane. Functionally, probably functions as a manganese efflux pump. The chain is Putative manganese efflux pump MntP from Bacillus anthracis (strain A0248).